The sequence spans 592 residues: Proline--tRNA ligase (592 aa).

The protein belongs to the class-II aminoacyl-tRNA synthetase family. ProS type 1 subfamily. Homodimer.

Its subcellular location is the cytoplasm. The enzyme catalyses tRNA(Pro) + L-proline + ATP = L-prolyl-tRNA(Pro) + AMP + diphosphate. Its function is as follows. Catalyzes the attachment of proline to tRNA(Pro) in a two-step reaction: proline is first activated by ATP to form Pro-AMP and then transferred to the acceptor end of tRNA(Pro). As ProRS can inadvertently accommodate and process non-cognate amino acids such as alanine and cysteine, to avoid such errors it has two additional distinct editing activities against alanine. One activity is designated as 'pretransfer' editing and involves the tRNA(Pro)-independent hydrolysis of activated Ala-AMP. The other activity is designated 'posttransfer' editing and involves deacylation of mischarged Ala-tRNA(Pro). The misacylated Cys-tRNA(Pro) is not edited by ProRS. The chain is Proline--tRNA ligase from Corynebacterium urealyticum (strain ATCC 43042 / DSM 7109).